A 741-amino-acid polypeptide reads, in one-letter code: Phosphoribosylformylglycinamidine synthase subunit PurL (741 aa).

The active site involves H53. ATP contacts are provided by Y56 and K95. E97 contacts Mg(2+). Substrate is bound by residues 98–101 and R120; that span reads SHNH. Residue H99 is the Proton acceptor of the active site. D121 is a binding site for Mg(2+). Residue Q244 participates in substrate binding. D274 contributes to the Mg(2+) binding site. 318–320 is a substrate binding site; the sequence is ESQ. The ATP site is built by D501 and G538. N539 is a Mg(2+) binding site. S541 contacts substrate.

Belongs to the FGAMS family. Monomer. Part of the FGAM synthase complex composed of 1 PurL, 1 PurQ and 2 PurS subunits.

The protein resides in the cytoplasm. The catalysed reaction is N(2)-formyl-N(1)-(5-phospho-beta-D-ribosyl)glycinamide + L-glutamine + ATP + H2O = 2-formamido-N(1)-(5-O-phospho-beta-D-ribosyl)acetamidine + L-glutamate + ADP + phosphate + H(+). The protein operates within purine metabolism; IMP biosynthesis via de novo pathway; 5-amino-1-(5-phospho-D-ribosyl)imidazole from N(2)-formyl-N(1)-(5-phospho-D-ribosyl)glycinamide: step 1/2. Part of the phosphoribosylformylglycinamidine synthase complex involved in the purines biosynthetic pathway. Catalyzes the ATP-dependent conversion of formylglycinamide ribonucleotide (FGAR) and glutamine to yield formylglycinamidine ribonucleotide (FGAM) and glutamate. The FGAM synthase complex is composed of three subunits. PurQ produces an ammonia molecule by converting glutamine to glutamate. PurL transfers the ammonia molecule to FGAR to form FGAM in an ATP-dependent manner. PurS interacts with PurQ and PurL and is thought to assist in the transfer of the ammonia molecule from PurQ to PurL. This is Phosphoribosylformylglycinamidine synthase subunit PurL from Limosilactobacillus fermentum (strain NBRC 3956 / LMG 18251) (Lactobacillus fermentum).